Here is a 218-residue protein sequence, read N- to C-terminus: N-(5'-phosphoribosyl)anthranilate isomerase (218 aa).

This sequence belongs to the TrpF family.

The catalysed reaction is N-(5-phospho-beta-D-ribosyl)anthranilate = 1-(2-carboxyphenylamino)-1-deoxy-D-ribulose 5-phosphate. It participates in amino-acid biosynthesis; L-tryptophan biosynthesis; L-tryptophan from chorismate: step 3/5. This is N-(5'-phosphoribosyl)anthranilate isomerase from Chelativorans sp. (strain BNC1).